A 77-amino-acid polypeptide reads, in one-letter code: U8-lycotoxin-Ls1a (77 aa).

The signal sequence occupies residues 1–20; it reads MKLIIFTGLVLFAIVSLIEA. A propeptide spanning residues 21–26 is cleaved from the precursor; the sequence is QAENEK.

Belongs to the neurotoxin 19 (CSTX) family. 08 (U8-Lctx) subfamily. Post-translationally, contains 4 disulfide bonds. As to expression, expressed by the venom gland.

The protein resides in the secreted. This chain is U8-lycotoxin-Ls1a, found in Lycosa singoriensis (Wolf spider).